We begin with the raw amino-acid sequence, 509 residues long: Glycogen synthase (509 aa).

K47 contacts ADP-alpha-D-glucose.

The protein belongs to the glycosyltransferase 1 family. Bacterial/plant glycogen synthase subfamily.

The enzyme catalyses [(1-&gt;4)-alpha-D-glucosyl](n) + ADP-alpha-D-glucose = [(1-&gt;4)-alpha-D-glucosyl](n+1) + ADP + H(+). The protein operates within glycan biosynthesis; glycogen biosynthesis. Synthesizes alpha-1,4-glucan chains using ADP-glucose. The protein is Glycogen synthase of Xanthomonas euvesicatoria pv. vesicatoria (strain 85-10) (Xanthomonas campestris pv. vesicatoria).